Here is a 98-residue protein sequence, read N- to C-terminus: NADH-ubiquinone oxidoreductase chain 4L (98 aa).

The next 3 membrane-spanning stretches (helical) occupy residues 1–21 (MASINLNIIMAFIMALMGVLI), 28–48 (STLLCLEGMMLSLFILVTLLI), and 61–81 (LILLVFSACEAGVGLALLVTI).

Belongs to the complex I subunit 4L family. Core subunit of respiratory chain NADH dehydrogenase (Complex I) which is composed of 45 different subunits.

The protein resides in the mitochondrion inner membrane. The enzyme catalyses a ubiquinone + NADH + 5 H(+)(in) = a ubiquinol + NAD(+) + 4 H(+)(out). Its function is as follows. Core subunit of the mitochondrial membrane respiratory chain NADH dehydrogenase (Complex I) which catalyzes electron transfer from NADH through the respiratory chain, using ubiquinone as an electron acceptor. Part of the enzyme membrane arm which is embedded in the lipid bilayer and involved in proton translocation. The polypeptide is NADH-ubiquinone oxidoreductase chain 4L (MT-ND4L) (Thylamys elegans (Elegant fat-tailed mouse opossum)).